The sequence spans 187 residues: Elongation factor P (187 aa).

The protein belongs to the elongation factor P family.

Its subcellular location is the cytoplasm. It participates in protein biosynthesis; polypeptide chain elongation. Involved in peptide bond synthesis. Stimulates efficient translation and peptide-bond synthesis on native or reconstituted 70S ribosomes in vitro. Probably functions indirectly by altering the affinity of the ribosome for aminoacyl-tRNA, thus increasing their reactivity as acceptors for peptidyl transferase. This Erythrobacter litoralis (strain HTCC2594) protein is Elongation factor P.